Consider the following 4250-residue polypeptide: Dynein axonemal heavy chain 1 (4250 aa).

The disordered stretch occupies residues 1 to 73 (MEECNKEGPS…KSPLTGTDKK (73 aa)). The segment at 1-1527 (MEECNKEGPS…YIRAVNAEFI (1527 aa)) is stem. Residues 24-42 (PESHDLEKILQESNYHPER) are compositionally biased toward basic and acidic residues. Residues 46–55 (NPDPKTPPLP) are compositionally biased toward pro residues. AAA regions lie at residues 1528-1749 (YGYE…VISA), 1809-2042 (QAIR…NTVK), 2174-2434 (TMMP…VFQG), and 2532-2784 (DYNQ…LARH). Positions 1566–1573 (GPAGTGKT) match the GPAGTGKT motif motif. 1566–1573 (GPAGTGKT) serves as a coordination point for ATP. The CFDEFNR motif signature appears at 1616-1622 (CFDEFNR). Residues 1847-1854 (GPTGSGKS), 2212-2219 (GPTGTGKT), and 2571-2578 (GVGGSGRS) contribute to the ATP site. The segment at 2799 to 3097 (FSILIGQKKM…EELEMKCEQC (299 aa)) is stalk. Residues 3045 to 3128 (LREAQDDLEV…QETVENLENM (84 aa)) adopt a coiled-coil conformation. AAA stretches follow at residues 3182–3412 (LGNP…EIQA) and 3625–3844 (MQDF…QLKM).

The protein belongs to the dynein heavy chain family. In terms of assembly, consists of at least two heavy chains and a number of intermediate and light chains.

The protein resides in the cytoplasm. It localises to the cytoskeleton. Its subcellular location is the cilium axoneme. It is found in the cell projection. The protein localises to the cilium. The protein resides in the flagellum. In terms of biological role, force generating protein of cilia required for sperm flagellum motility. Produces force towards the minus ends of microtubules. Dynein has ATPase activity; the force-producing power stroke is thought to occur on release of ADP. Required in spermatozoa for the formation of the inner dynein arms and biogenesis of the axoneme. This is Dynein axonemal heavy chain 1 from Mus musculus (Mouse).